A 780-amino-acid chain; its full sequence is Replication origin-binding protein (780 aa).

The 157-residue stretch at 39 to 195 folds into the Helicase ATP-binding domain; that stretch reads SFENVRQPIK…AAFKPDTQIA (157 aa). An ATP-binding site is contributed by 52–59; sequence AAMGSGKT.

It belongs to the herpesviridae OriBP family.

In terms of biological role, probably involved in DNA replication. Binds the origin of replication (ori). This chain is Replication origin-binding protein (U73), found in Homo sapiens (Human).